A 382-amino-acid chain; its full sequence is Ribosomal RNA large subunit methyltransferase G (382 aa).

This sequence belongs to the methyltransferase superfamily. RlmG family.

The protein localises to the cytoplasm. The catalysed reaction is guanosine(1835) in 23S rRNA + S-adenosyl-L-methionine = N(2)-methylguanosine(1835) in 23S rRNA + S-adenosyl-L-homocysteine + H(+). Its function is as follows. Specifically methylates the guanine in position 1835 (m2G1835) of 23S rRNA. The sequence is that of Ribosomal RNA large subunit methyltransferase G from Psychromonas ingrahamii (strain DSM 17664 / CCUG 51855 / 37).